The chain runs to 434 residues: Gamma-glutamyl phosphate reductase (434 aa).

The protein belongs to the gamma-glutamyl phosphate reductase family.

It localises to the cytoplasm. The catalysed reaction is L-glutamate 5-semialdehyde + phosphate + NADP(+) = L-glutamyl 5-phosphate + NADPH + H(+). Its pathway is amino-acid biosynthesis; L-proline biosynthesis; L-glutamate 5-semialdehyde from L-glutamate: step 2/2. Its function is as follows. Catalyzes the NADPH-dependent reduction of L-glutamate 5-phosphate into L-glutamate 5-semialdehyde and phosphate. The product spontaneously undergoes cyclization to form 1-pyrroline-5-carboxylate. This is Gamma-glutamyl phosphate reductase from Nostoc sp. (strain PCC 7120 / SAG 25.82 / UTEX 2576).